A 357-amino-acid polypeptide reads, in one-letter code: MKHFTTLIVVFVAIKAYLVALALVVPRQYDTSSTLLFPNNRFLSRLVIWDSVFFVSSAERSHLYEHEWAFSWMWSRALGLAGSRDAIAYTAIAVSSLSHLLAALMLRKLTESVFHNKRFAETTALMYILSPAGIFLVAGYTESLFALLSFTGLYLRQRGQYPLAGAVLGASCLLRGNGLLWGIPFLFDLASAIKHNQFNRGVSVVIGGSLVGAVFLYTQYLPWSIFCPERDEWCNYYIPSIYGYVQQRYWNVGFLRYWTANNIPNFLFAAPVLYLMYQSMSTNPSLVPFYTVHAIMGLACVFMWHVQIITRISTCLPTLYWYMAKLAQGYNGHYVVRYIFVWITFQVVMWGAYLPPA.

8 helical membrane-spanning segments follow: residues 6–26 (TLIV…LVVP), 86–106 (AIAY…ALML), 128–148 (ILSP…FALL), 167–187 (VLGA…PFLF), 201–221 (GVSV…TQYL), 257–277 (YWTA…YLMY), 286–306 (LVPF…MWHV), and 334–354 (YVVR…GAYL).

This sequence belongs to the PIGV family.

The protein resides in the endoplasmic reticulum membrane. It participates in glycolipid biosynthesis; glycosylphosphatidylinositol-anchor biosynthesis. Its function is as follows. Mannosyltransferase involved in glycosylphosphatidylinositol-anchor biosynthesis. Transfers the second mannose to the glycosylphosphatidylinositol during GPI precursor assembly. This is GPI mannosyltransferase 2 (GPI18) from Yarrowia lipolytica (strain CLIB 122 / E 150) (Yeast).